We begin with the raw amino-acid sequence, 656 residues long: Chaperone protein DnaK (656 aa).

Thr-204 is subject to Phosphothreonine; by autocatalysis. Positions 607–656 are disordered; that stretch reads VYAKKGGAAGAPPGGEAEGEPQAQAGGKKEDVVDAEFEEVKDEKKKDEDK. Over residues 620–632 the composition is skewed to low complexity; the sequence is GGEAEGEPQAQAG. Basic and acidic residues predominate over residues 647–656; that stretch reads KDEKKKDEDK.

Belongs to the heat shock protein 70 family.

In terms of biological role, acts as a chaperone. This Coxiella burnetii (strain CbuK_Q154) (Coxiella burnetii (strain Q154)) protein is Chaperone protein DnaK.